Reading from the N-terminus, the 401-residue chain is Probable N-acetyl-gamma-glutamyl-phosphate reductase, chloroplastic (401 aa).

The N-terminal 48 residues, 1–48 (MSTASAFSSIQGCWFKGERKIRVADKRAKRLTLGSHVASPSSMSFRVS), are a transit peptide targeting the chloroplast. Cys205 is an active-site residue.

It belongs to the NAGSA dehydrogenase family. Type 1 subfamily. In terms of assembly, homotetramer.

Its subcellular location is the plastid. It is found in the chloroplast. The catalysed reaction is N-acetyl-L-glutamate 5-semialdehyde + phosphate + NADP(+) = N-acetyl-L-glutamyl 5-phosphate + NADPH + H(+). The protein operates within amino-acid biosynthesis; L-arginine biosynthesis; N(2)-acetyl-L-ornithine from L-glutamate: step 3/4. The chain is Probable N-acetyl-gamma-glutamyl-phosphate reductase, chloroplastic from Arabidopsis thaliana (Mouse-ear cress).